Here is a 57-residue protein sequence, read N- to C-terminus: UPF0337 protein SCO0678 (57 aa).

Basic and acidic residues-rich tracts occupy residues 1–22 (MAGN…KEAA) and 42–57 (GDAR…VFRH). The interval 1–57 (MAGNEKSRAKMEQAKGKAKEAAGRAVGNERMTAEGRAAQSKGDARQAKEKGKDVFRH) is disordered.

This sequence belongs to the UPF0337 (CsbD) family.

The protein is UPF0337 protein SCO0678 of Streptomyces coelicolor (strain ATCC BAA-471 / A3(2) / M145).